The primary structure comprises 111 residues: Cell cycle protein GpsB (111 aa).

Residues 38-72 (IKDYEAFHKEFEQLKQQNARLKRELEEQKLAATQV) adopt a coiled-coil conformation.

Belongs to the GpsB family. As to quaternary structure, forms polymers through the coiled coil domains. Interacts with PBP1, MreC and EzrA.

It is found in the cytoplasm. Divisome component that associates with the complex late in its assembly, after the Z-ring is formed, and is dependent on DivIC and PBP2B for its recruitment to the divisome. Together with EzrA, is a key component of the system that regulates PBP1 localization during cell cycle progression. Its main role could be the removal of PBP1 from the cell pole after pole maturation is completed. Also contributes to the recruitment of PBP1 to the division complex. Not essential for septum formation. The polypeptide is Cell cycle protein GpsB (Bacillus cereus (strain ATCC 10987 / NRS 248)).